A 365-amino-acid chain; its full sequence is S-adenosylmethionine:tRNA ribosyltransferase-isomerase (365 aa).

The protein belongs to the QueA family. In terms of assembly, monomer.

It is found in the cytoplasm. The enzyme catalyses 7-aminomethyl-7-carbaguanosine(34) in tRNA + S-adenosyl-L-methionine = epoxyqueuosine(34) in tRNA + adenine + L-methionine + 2 H(+). It participates in tRNA modification; tRNA-queuosine biosynthesis. Transfers and isomerizes the ribose moiety from AdoMet to the 7-aminomethyl group of 7-deazaguanine (preQ1-tRNA) to give epoxyqueuosine (oQ-tRNA). The polypeptide is S-adenosylmethionine:tRNA ribosyltransferase-isomerase (Rickettsia peacockii (strain Rustic)).